The primary structure comprises 83 residues: Cytochrome b559 subunit alpha (83 aa).

A helical transmembrane segment spans residues Val21–Trp35. His23 is a binding site for heme.

This sequence belongs to the PsbE/PsbF family. As to quaternary structure, heterodimer of an alpha subunit and a beta subunit. PSII is composed of 1 copy each of membrane proteins PsbA, PsbB, PsbC, PsbD, PsbE, PsbF, PsbH, PsbI, PsbJ, PsbK, PsbL, PsbM, PsbT, PsbX, PsbY, PsbZ, Psb30/Ycf12, at least 3 peripheral proteins of the oxygen-evolving complex and a large number of cofactors. It forms dimeric complexes. Heme b serves as cofactor.

The protein localises to the plastid. The protein resides in the chloroplast thylakoid membrane. Its function is as follows. This b-type cytochrome is tightly associated with the reaction center of photosystem II (PSII). PSII is a light-driven water:plastoquinone oxidoreductase that uses light energy to abstract electrons from H(2)O, generating O(2) and a proton gradient subsequently used for ATP formation. It consists of a core antenna complex that captures photons, and an electron transfer chain that converts photonic excitation into a charge separation. The sequence is that of Cytochrome b559 subunit alpha from Agrostis stolonifera (Creeping bentgrass).